The chain runs to 341 residues: Phenylalanine--tRNA ligase alpha subunit (341 aa).

Position 255 (Glu-255) interacts with Mg(2+).

The protein belongs to the class-II aminoacyl-tRNA synthetase family. Phe-tRNA synthetase alpha subunit type 1 subfamily. As to quaternary structure, tetramer of two alpha and two beta subunits. It depends on Mg(2+) as a cofactor.

It is found in the cytoplasm. The catalysed reaction is tRNA(Phe) + L-phenylalanine + ATP = L-phenylalanyl-tRNA(Phe) + AMP + diphosphate + H(+). The sequence is that of Phenylalanine--tRNA ligase alpha subunit from Natranaerobius thermophilus (strain ATCC BAA-1301 / DSM 18059 / JW/NM-WN-LF).